The sequence spans 185 residues: Ribosome-recycling factor (185 aa).

A disordered region spans residues 128–158 (VRNTRQDANNKVKKLEKDKEISEDESKKAQE).

This sequence belongs to the RRF family.

The protein localises to the cytoplasm. Functionally, responsible for the release of ribosomes from messenger RNA at the termination of protein biosynthesis. May increase the efficiency of translation by recycling ribosomes from one round of translation to another. This chain is Ribosome-recycling factor, found in Helicobacter pylori (strain J99 / ATCC 700824) (Campylobacter pylori J99).